The sequence spans 97 residues: Large ribosomal subunit protein uL23 (97 aa).

This sequence belongs to the universal ribosomal protein uL23 family. Part of the 50S ribosomal subunit. Contacts protein L29, and trigger factor when it is bound to the ribosome.

Its function is as follows. One of the early assembly proteins it binds 23S rRNA. One of the proteins that surrounds the polypeptide exit tunnel on the outside of the ribosome. Forms the main docking site for trigger factor binding to the ribosome. This is Large ribosomal subunit protein uL23 from Brucella abortus (strain S19).